The following is a 428-amino-acid chain: Sporulation kinase C (428 aa).

The next 2 helical transmembrane spans lie at Ile8 to Ile28 and Pro36 to Ile56. The PAS domain occupies Leu76–Ser147. The PAC domain maps to Gly148–Glu200. The 206-residue stretch at Gly221–Ser426 folds into the Histidine kinase domain. His224 bears the Phosphohistidine; by autocatalysis mark.

Oligomerizes, probably forms homodimers; oligomerization is assisted by FloT. Interacts with FloT. Another study shows only rare colocalization with FloT or FloA membrane assemblies. KinC membrane assemblies are more mobile than FloT membrane assemblies.

Its subcellular location is the cell membrane. The protein localises to the membrane raft. It carries out the reaction ATP + protein L-histidine = ADP + protein N-phospho-L-histidine.. Functionally, phosphorylates the sporulation-regulatory protein Spo0A a transcription factor that also controls biofilm formation. Requires FloT and FloA for localization to DRMs and for activity. In Bacillus subtilis (strain 168), this protein is Sporulation kinase C.